Here is a 175-residue protein sequence, read N- to C-terminus: Trafficking protein particle complex subunit 20 (175 aa).

Belongs to the TRAPP small subunits family. Sedlin subfamily. Part of the multisubunit TRAPP (transport protein particle) I complex composed of BET3, BET5, TRS20, TRS23, TRS31 and TRS33. Part of the multisubunit TRAPP (transport protein particle) II complex composed of BET3, BET5, TRS20, TRS23, TRS31, TRS33, TRS65, TRS85, TRS120 and TRS130. Part of the multisubunit TRAPP (transport protein particle) III complex composed of BET3, BET5, TRS20, TRS23, TRS31, TRS33 and TRS85.

The protein resides in the golgi apparatus. Its subcellular location is the cis-Golgi network. It localises to the endoplasmic reticulum. The protein localises to the preautophagosomal structure. Component of the TRAPP I, TRAPP II and TRAPP III complexes which act as guanine nucleotide exchange factors (GEF) for YPT1. TRAPP I plays a key role in the late stages of endoplasmic reticulum to Golgi traffic. TRAPP II plays a role in intra-Golgi transport. TRAPP III plays a role in autophagosome formation. In Saccharomyces cerevisiae (strain ATCC 204508 / S288c) (Baker's yeast), this protein is Trafficking protein particle complex subunit 20 (TRS20).